Reading from the N-terminus, the 416-residue chain is Cell division protein FtsZ (416 aa).

GTP contacts are provided by residues 20–24, 107–109, Glu-138, Arg-142, and Asp-186; these read GGGVN and GTG. Positions 319–335 are enriched in polar residues; that stretch reads QETNANNSSPAQRQAES. The tract at residues 319–416 is disordered; that stretch reads QETNANNSSP…DSLDFPDFLK (98 aa). Positions 376–392 are enriched in acidic residues; it reads QDDDIPDDAGFDVDLPA. The segment covering 404–416 has biased composition (basic and acidic residues); the sequence is ARKDSLDFPDFLK.

This sequence belongs to the FtsZ family. In terms of assembly, homodimer. Polymerizes to form a dynamic ring structure in a strictly GTP-dependent manner. Interacts directly with several other division proteins.

The protein resides in the cytoplasm. Essential cell division protein that forms a contractile ring structure (Z ring) at the future cell division site. The regulation of the ring assembly controls the timing and the location of cell division. One of the functions of the FtsZ ring is to recruit other cell division proteins to the septum to produce a new cell wall between the dividing cells. Binds GTP and shows GTPase activity. The chain is Cell division protein FtsZ from Kocuria rhizophila (strain ATCC 9341 / DSM 348 / NBRC 103217 / DC2201).